The primary structure comprises 411 residues: Potassium channel subfamily K member 3 (411 aa).

Residues 1-8 lie on the Cytoplasmic side of the membrane; it reads MKRQNVRT. The chain crosses the membrane as a helical span at residues 9–29; the sequence is LALIVCTFTYLLVGAAVFDAL. Asn53 carries N-linked (GlcNAc...) asparagine glycosylation. The segment at residues 78–101 is an intramembrane region (pore-forming); the sequence is WRFAGSFYFAITVITTIGYGHAAP. Residues 108–128 form a helical membrane-spanning segment; it reads VFCMFYALLGIPLTLVMFQSL. Residues 129–158 lie on the Cytoplasmic side of the membrane; sequence GERINTFVRYLLHRAKRGLGMRHAEVSMAN. Residues 159–179 traverse the membrane as a helical segment; the sequence is MVLIGFVSCISTLCIGAAAFS. Residues 184–207 constitute an intramembrane region (pore-forming); the sequence is WTFFQAYYYCFITLTTIGFGDYVA. The chain crosses the membrane as a helical span at residues 223 to 243; it reads FSFVYILTGLTVIGAFLNLVV. The Cytoplasmic portion of the chain corresponds to 244-411; that stretch reads LRFMTMNAED…RGLMKRRSSV (168 aa).

The protein belongs to the two pore domain potassium channel (TC 1.A.1.8) family. In terms of assembly, homodimer. Heterodimer with KCNK1. Heterodimer with KCNK9. As to expression, strongest expression in heart. Moderate expression in lung and brain. Low levels in liver, kidney and skeletal muscle. Expressed in cerebellar granule cells (at protein level).

Its subcellular location is the cell membrane. It carries out the reaction K(+)(in) = K(+)(out). It catalyses the reaction Na(+)(in) = Na(+)(out). With respect to regulation, inhibited by extracellular acidification, muscarinic signaling, divalent metal cations Zn(2+) and Ba(2+), isoflurane, bupivacaine and phenytoin. Activated by protein kinase A. Ruthenium red resistant. K(+) channel that conducts voltage-dependent outward rectifying currents upon membrane depolarization. Voltage sensing is coupled to K(+) electrochemical gradient in an 'ion flux gating' mode where outward but not inward ion flow opens the gate. Changes ion selectivity and becomes permeable to Na(+) ions in response to extracellular acidification. Protonation of the pH sensor His-98 stabilizes C-type inactivation conformation likely converting the channel from outward K(+)-conducting, to inward Na(+)-conducting to nonconductive state. Homo- and heterodimerizes to form functional channels with distinct regulatory and gating properties. Allows K(+) currents with fast-gating kinetics important for the repolarization and hyperpolarization phases of action potentials. In cerebellar granule cells, heteromeric KCNK3:KCNK9 channel may hyperpolarize the resting membrane potential to limit intrinsic neuronal excitability, but once the action potential threshold is reached, it may support high-frequency action potential firing and increased neuronal excitability. Dispensable for central chemosensory respiration i.e. breathing controlled by brainstem CO2/pH, it rather conducts pH-sensitive currents and controls the firing rate of serotonergic raphe neurons involved in potentiation of the respiratory chemoreflex. Additionally, imparts chemosensitivity to type 1 cells in carotid bodies which respond to a decrease in arterial oxygen pressure or an increase in carbon dioxide pressure or pH to initiate adaptive changes in pulmonary ventilation. In adrenal gland, contributes to the maintenance of a hyperpolarized resting membrane potential of aldosterone-producing cells at zona glomerulosa and limits aldosterone release as part of a regulatory mechanism that controls arterial blood pressure and electrolyte homeostasis. In brown adipocytes, mediates K(+) efflux that counteracts norepinephrine-induced membrane depolarization, limits Ca(2+) efflux and downstream cAMP and PKA signaling, ultimately attenuating lipid oxidation and adaptive thermogenesis. The protein is Potassium channel subfamily K member 3 of Rattus norvegicus (Rat).